Here is a 314-residue protein sequence, read N- to C-terminus: MKIILANPRGFCAGVDRAISIVELALEIHGAPIYVRHEVVHNRFVVNGLRERGAIFVEELSEVPDGAIVIFSAHGVSQAVRQEAKDRNLKVFDATCPLVTKVHMQVARASRKGTKAILIGHKGHPEVEGTMGQYSNEDGGIFLIEKVEDIARLPMQENDNLTFMTQTTLSLDDTAETIAALKEKYPAIQGPHKNDICYATTNRQEAVRELAKLSDLVLVVGSKNSSNSNRLAELASRMGVKSQLLDEPADIQADWFNDVKTIGITAGASAPEELGQSIISRLKRFGANSIEELQGLEGNMFFEVPKELRIKEVN.

Position 12 (cysteine 12) interacts with [4Fe-4S] cluster. Residues histidine 41 and histidine 74 each contribute to the (2E)-4-hydroxy-3-methylbut-2-enyl diphosphate site. 2 residues coordinate dimethylallyl diphosphate: histidine 41 and histidine 74. The isopentenyl diphosphate site is built by histidine 41 and histidine 74. Cysteine 96 lines the [4Fe-4S] cluster pocket. Histidine 124 contributes to the (2E)-4-hydroxy-3-methylbut-2-enyl diphosphate binding site. A dimethylallyl diphosphate-binding site is contributed by histidine 124. Residue histidine 124 coordinates isopentenyl diphosphate. Residue glutamate 126 is the Proton donor of the active site. Threonine 167 provides a ligand contact to (2E)-4-hydroxy-3-methylbut-2-enyl diphosphate. Cysteine 197 provides a ligand contact to [4Fe-4S] cluster. (2E)-4-hydroxy-3-methylbut-2-enyl diphosphate-binding residues include serine 225, serine 226, asparagine 227, and serine 269. Serine 225, serine 226, asparagine 227, and serine 269 together coordinate dimethylallyl diphosphate. Isopentenyl diphosphate-binding residues include serine 225, serine 226, asparagine 227, and serine 269.

The protein belongs to the IspH family. Requires [4Fe-4S] cluster as cofactor.

It catalyses the reaction isopentenyl diphosphate + 2 oxidized [2Fe-2S]-[ferredoxin] + H2O = (2E)-4-hydroxy-3-methylbut-2-enyl diphosphate + 2 reduced [2Fe-2S]-[ferredoxin] + 2 H(+). The enzyme catalyses dimethylallyl diphosphate + 2 oxidized [2Fe-2S]-[ferredoxin] + H2O = (2E)-4-hydroxy-3-methylbut-2-enyl diphosphate + 2 reduced [2Fe-2S]-[ferredoxin] + 2 H(+). Its pathway is isoprenoid biosynthesis; dimethylallyl diphosphate biosynthesis; dimethylallyl diphosphate from (2E)-4-hydroxy-3-methylbutenyl diphosphate: step 1/1. It functions in the pathway isoprenoid biosynthesis; isopentenyl diphosphate biosynthesis via DXP pathway; isopentenyl diphosphate from 1-deoxy-D-xylulose 5-phosphate: step 6/6. Catalyzes the conversion of 1-hydroxy-2-methyl-2-(E)-butenyl 4-diphosphate (HMBPP) into a mixture of isopentenyl diphosphate (IPP) and dimethylallyl diphosphate (DMAPP). Acts in the terminal step of the DOXP/MEP pathway for isoprenoid precursor biosynthesis. This chain is 4-hydroxy-3-methylbut-2-enyl diphosphate reductase, found in Haemophilus influenzae (strain ATCC 51907 / DSM 11121 / KW20 / Rd).